The following is a 396-amino-acid chain: Putative F-box/kelch-repeat protein At3g17540 (396 aa).

One can recognise an F-box domain in the interval 4-50; the sequence is TMVISDLPHEIESEILSRVPTKSLAKLHTTCKRWYALFRDPRFVKKN. Kelch repeat units follow at residues 163–209, 253–299, and 338–386; these read LRYC…GMSL, VLSI…FLAV, and RIYI…KRKG.

This Arabidopsis thaliana (Mouse-ear cress) protein is Putative F-box/kelch-repeat protein At3g17540.